A 533-amino-acid polypeptide reads, in one-letter code: tRNA(Ile)-lysidine synthase (533 aa).

21-26 contributes to the ATP binding site; that stretch reads SGGADS. The 124-residue stretch at 377 to 500 folds into the CMP/dCMP-type deaminase domain; that stretch reads DLLDTAMGEA…DLLSSHWGHV (124 aa).

It belongs to the tRNA(Ile)-lysidine synthase family.

The protein resides in the cytoplasm. The enzyme catalyses cytidine(34) in tRNA(Ile2) + L-lysine + ATP = lysidine(34) in tRNA(Ile2) + AMP + diphosphate + H(+). In terms of biological role, ligates lysine onto the cytidine present at position 34 of the AUA codon-specific tRNA(Ile) that contains the anticodon CAU, in an ATP-dependent manner. Cytidine is converted to lysidine, thus changing the amino acid specificity of the tRNA from methionine to isoleucine. The sequence is that of tRNA(Ile)-lysidine synthase from Deinococcus deserti (strain DSM 17065 / CIP 109153 / LMG 22923 / VCD115).